Here is a 310-residue protein sequence, read N- to C-terminus: Conjugation stage-specific protein (310 aa).

This sequence belongs to the archaeal Rpo3/eukaryotic RPB3 RNA polymerase subunit family.

It localises to the nucleus. In terms of biological role, may be a stage-specific RNA polymerase subunit. In Tetrahymena thermophila, this protein is Conjugation stage-specific protein (CNJC).